The sequence spans 494 residues: Probable malate:quinone oxidoreductase 3 (494 aa).

Belongs to the MQO family. It depends on FAD as a cofactor.

It carries out the reaction (S)-malate + a quinone = a quinol + oxaloacetate. It participates in carbohydrate metabolism; tricarboxylic acid cycle; oxaloacetate from (S)-malate (quinone route): step 1/1. The protein is Probable malate:quinone oxidoreductase 3 of Staphylococcus epidermidis (strain ATCC 12228 / FDA PCI 1200).